Consider the following 594-residue polypeptide: Putative 3,4-dihydroxy-2-butanone kinase (594 aa).

Positions 11 to 341 constitute a DhaK domain; sequence DPNDVVTEFI…LDAPTKAPNW (331 aa). Substrate-binding positions include 62–65, lysine 113, and aspartate 118; that span reads GSGH. Histidine 226 serves as the catalytic Tele-hemiaminal-histidine intermediate. The interval 339-358 is disordered; the sequence is PNWPVGAEGNRPPAKIPVPL. A DhaL domain is found at 381 to 585; sequence HILETAIEAA…AAAWYRAAAL (205 aa). ATP-binding positions include 410–413, 455–456, glycine 499, 507–508, and 570–572; these read DGDC, TS, TL, and DPG.

It belongs to the dihydroxyacetone kinase (DAK) family.

This Solanum lycopersicum (Tomato) protein is Putative 3,4-dihydroxy-2-butanone kinase (DHBK).